The chain runs to 278 residues: HTH-type transcriptional activator RhaS (278 aa).

Residues 174-272 (NQLMAWLEDH…NWSPRDIRQG (99 aa)) enclose the HTH araC/xylS-type domain. 2 DNA-binding regions (H-T-H motif) span residues 191 to 212 (EAVA…KQHT) and 239 to 262 (VTEI…RREF).

Binds DNA as a dimer.

It is found in the cytoplasm. Functionally, activates expression of the rhaBAD and rhaT operons. The sequence is that of HTH-type transcriptional activator RhaS from Salmonella heidelberg (strain SL476).